Consider the following 202-residue polypeptide: Small ribosomal subunit protein uS4 (202 aa).

Basic residues predominate over residues 1-13 (MSRYRGPRLRVTR). Residues 1 to 42 (MSRYRGPRLRVTRRLGELPGLTRKASKKSNPPGQHGQARRKR) are disordered. The 63-residue stretch at 90-152 (NRLDNVCFRL…KASKKLVEGN (63 aa)) folds into the S4 RNA-binding domain.

It belongs to the universal ribosomal protein uS4 family. Part of the 30S ribosomal subunit. Contacts protein S5. The interaction surface between S4 and S5 is involved in control of translational fidelity.

Functionally, one of the primary rRNA binding proteins, it binds directly to 16S rRNA where it nucleates assembly of the body of the 30S subunit. With S5 and S12 plays an important role in translational accuracy. This is Small ribosomal subunit protein uS4 from Prochlorococcus marinus (strain MIT 9312).